A 525-amino-acid polypeptide reads, in one-letter code: MSL complex subunit 3 (525 aa).

Residues 13 to 72 (SGEKVLCFEPDPTKARVLYDAKIIDVIIGKDEKGRKIPEYLIHFNGWNRSWDRWAAEEHV) enclose the Tudor-knot domain. 2 disordered regions span residues 119 to 148 (KEKS…KEHR) and 302 to 383 (TTTT…DTSA). The segment covering 136-146 (SCGEKNGGIKE) has biased composition (basic and acidic residues). Residues 172–521 (DERTITIDIP…CEAHYSTKNP (350 aa)) enclose the MRG domain. Positions 294–444 (FFLPIKESTT…WKLVPDNYPP (151 aa)) are required for the histone acetyltransferase activity of the MSL complex. Residues S313 and S315 each carry the phosphoserine modification. Residues 320–332 (NPSTPQSTESQPP) are compositionally biased toward low complexity. A phosphoserine mark is found at S371 and S404. T409 carries the post-translational modification Phosphothreonine. A phosphoserine mark is found at S411 and S415.

As to quaternary structure, component of the MSL histone acetyltransferase complex at least composed of the KAT8/MOF, MSL1/hampin, MSL2 and MSL3. Interacts (via the MRG domain) with MSL1 and KAT8/MOF. In testis, expression is mostly restricted to the spermatocyte stage and only in a small portion of spermatogonia.

It localises to the nucleus. Functionally, non-catalytic component of the MSL histone acetyltransferase complex, a multiprotein complex that mediates the majority of histone H4 acetylation at 'Lys-16' (H4K16ac), an epigenetic mark that prevents chromatin compaction. The MSL complex is required for chromosome stability and genome integrity by maintaining homeostatic levels of H4K16ac. The MSL complex is also involved in gene dosage by promoting up-regulation of genes expressed by the X chromosome. X up-regulation is required to compensate for autosomal biallelic expression. The MSL complex also participates in gene dosage compensation by promoting expression of Tsix non-coding RNA. Acts as a histone reader that specifically recognizes and binds histone H4 monomethylated at 'Lys-20' (H4K20Me1) in a DNA-dependent manner and is proposed to be involved in chromosomal targeting of the MSL complex. May play a role X inactivation in females. The chain is MSL complex subunit 3 from Mus musculus (Mouse).